The following is a 325-amino-acid chain: MKIFDYEDIQLIPNKCIVESRSECDTTIQFGPKKFKLPVVPANMQTVMNEKLAKWFAENDYFYIMHRFDEEARIPFIKHMQNSGLFASISVGVKKAEFDFIEKLAQEKLIPEYITIDIAHGHSDSVINMIKHIKTHIPDSFVIAGNVGTPEGVRELENAGADATKVGIGPGRVCITKIKTGFGTGGWQLAALNICSKAARKPLIADGGIRTHGDIAKSIRFGASMVMIGSLFAAHEESPGETVELDGKQYKEYFGSASEFQKGEHKNVEGKKMFVEHKGSLTDTLKEMQQDLQSSISYAGGKDLKSLRTVDYVIVRNSIFNGDRD.

The active-site Thioimidate intermediate is the Cys174. 203–226 serves as a coordination point for NADP(+); sequence LIADGGIRTHGDIAKSIRFGASMV.

It belongs to the IMPDH/GMPR family. GuaC type 2 subfamily.

It catalyses the reaction IMP + NH4(+) + NADP(+) = GMP + NADPH + 2 H(+). Catalyzes the irreversible NADPH-dependent deamination of GMP to IMP. It functions in the conversion of nucleobase, nucleoside and nucleotide derivatives of G to A nucleotides, and in maintaining the intracellular balance of A and G nucleotides. The chain is GMP reductase from Staphylococcus aureus (strain MRSA252).